An 80-amino-acid chain; its full sequence is UPF0248 protein MJ1316 (80 aa).

This sequence belongs to the UPF0248 family.

This Methanocaldococcus jannaschii (strain ATCC 43067 / DSM 2661 / JAL-1 / JCM 10045 / NBRC 100440) (Methanococcus jannaschii) protein is UPF0248 protein MJ1316.